The following is a 674-amino-acid chain: YAP1-binding protein 1 (674 aa).

It belongs to the YBP1 family. In terms of assembly, interacts with YAP1. Forms a peroxide stress induced complex with YAP1 in the cytoplasm. Systematic proteome-wide 2-hybrid interaction studies suggest that YAP1, HYR1/GPX3, and YBP1 all interact with the nuclear pore complex subunit NUP116, which is involved in nucleocytoplasmic transport.

The protein localises to the cytoplasm. Its function is as follows. Involved in oxidative stress response and redox homeostasis. Required for hydrogen peroxide-induced oxidation and nuclear localization (activation) of YAP1. Functions probably in concert with HYP1/GPX3, the actual YAP1 modifying enzyme. YBP1 is not required for HYP1/GPX3-independent, diamide-induced oxidation of YAP1. The protein is YAP1-binding protein 1 of Saccharomyces cerevisiae (strain ATCC 204508 / S288c) (Baker's yeast).